A 121-amino-acid chain; its full sequence is Ribonuclease P protein component (121 aa).

Belongs to the RnpA family. As to quaternary structure, consists of a catalytic RNA component (M1 or rnpB) and a protein subunit.

It catalyses the reaction Endonucleolytic cleavage of RNA, removing 5'-extranucleotides from tRNA precursor.. RNaseP catalyzes the removal of the 5'-leader sequence from pre-tRNA to produce the mature 5'-terminus. It can also cleave other RNA substrates such as 4.5S RNA. The protein component plays an auxiliary but essential role in vivo by binding to the 5'-leader sequence and broadening the substrate specificity of the ribozyme. This is Ribonuclease P protein component from Bifidobacterium adolescentis (strain ATCC 15703 / DSM 20083 / NCTC 11814 / E194a).